A 325-amino-acid chain; its full sequence is Apoptosis-enhancing nuclease (325 aa).

A Nucleolar localization signal motif is present at residues 27–35; that stretch reads RKRHKRRSR. Residues 85–105 form a disordered region; it reads RAGSGSAPCSRRPAPGKASGP. The region spanning 110 to 266 is the Exonuclease domain; the sequence is CVAIDCEMVG…EDATTAMELY (157 aa). Residues 165–188 carry the Nuclear localization signal motif; sequence RQHMRKAVPFQVAQKEILKLLKGK. A disordered region spans residues 281–325; sequence LWTCPEDREPDSSTDMEQYMEDQYWPDDLAHGSRGGAREAQDRRN. The span at 308 to 325 shows a compositional bias: basic and acidic residues; that stretch reads DLAHGSRGGAREAQDRRN.

It is found in the nucleus. It localises to the nucleolus. Its function is as follows. Exonuclease with activity against single- and double-stranded DNA and RNA. Mediates p53-induced apoptosis. When induced by p53 following DNA damage, digests double-stranded DNA to form single-stranded DNA and amplifies DNA damage signals, leading to enhancement of apoptosis. This chain is Apoptosis-enhancing nuclease (AEN), found in Homo sapiens (Human).